A 538-amino-acid chain; its full sequence is Nectin-2 (538 aa).

An N-terminal signal peptide occupies residues 1-31 (MARAAALLPSRSPPTPLLWPLLLLLLLETGA). Residues 32–156 (QDVRVQVLPE…KGSVRGMTWL (125 aa)) form the Ig-like V-type domain. Over 32–360 (QDVRVQVLPE…NTAGAGATGG (329 aa)) the chain is Extracellular. Intrachain disulfides connect Cys54-Cys140, Cys183-Cys238, and Cys283-Cys329. N-linked (GlcNAc...) asparagine glycosylation is present at Asn137. 2 Ig-like C2-type domains span residues 162 to 256 (PKNQ…VTLS) and 261 to 345 (PEVS…QVIF). N-linked (GlcNAc...) asparagine glycosylation occurs at Asn324. The helical transmembrane segment at 361–381 (IIGGIIAAIIATAVAATGILI) threads the bilayer. The Cytoplasmic portion of the chain corresponds to 382-538 (CRQQRKEQTL…GFVMSRAMYV (157 aa)). Residues 390 to 414 (TLQGAEEDEDLEGPPSYKPPTPKAK) are disordered. Thr410 is subject to Phosphothreonine. A phosphoserine mark is found at Ser433, Gly465, and Gly470. Residues 462-489 (ERSGPLHPGATSLGSPIPVPPGPPAVED) form a disordered region.

This sequence belongs to the nectin family. Can form trans-heterodimers with NECTIN3. Interacts with CD226 or with PVRIG; these interactions are competitive and have a differential functional outcome on T-cell activation, either positive or negative, respectively. Binds with low affinity to TIGIT. As to quaternary structure, (Microbial infection) Interacts with herpes simplex virus 1 (HHV-1) mutant Rid1, herpes simplex virus 1 (HHV-2) and pseudorabies virus (PRV) envelope glycoprotein D. Ubiquitous.

It is found in the cell membrane. Modulator of T-cell signaling. Can be either a costimulator of T-cell function, or a coinhibitor, depending on the receptor it binds to. Upon binding to CD226, stimulates T-cell proliferation and cytokine production, including that of IL2, IL5, IL10, IL13, and IFNG. Upon interaction with PVRIG, inhibits T-cell proliferation. These interactions are competitive. Probable cell adhesion protein. Functionally, (Microbial infection) Acts as a receptor for herpes simplex virus 1 (HHV-1) mutant Rid1, herpes simplex virus 1 (HHV-2) and pseudorabies virus (PRV). This is Nectin-2 from Homo sapiens (Human).